A 61-amino-acid polypeptide reads, in one-letter code: Beta-defensin 133 (61 aa).

The signal sequence occupies residues 1–23; sequence MKIHVFLFVLFFFLVPIATRVKC. Disulfide bonds link Cys31–Cys59 and Cys38–Cys52.

It belongs to the beta-defensin family.

The protein localises to the secreted. Functionally, has antibacterial activity. The protein is Beta-defensin 133 (DEFB133) of Homo sapiens (Human).